The following is a 276-amino-acid chain: Rhomboid protease GlpG (276 aa).

A run of 6 helical transmembrane segments spans residues 94–114, 142–162, 169–189, 192–212, 229–249, and 250–270; these read GPVT…MSLI, IFMH…WYLG, LGSG…GYVQ, FSGP…GYVW, LIIF…GMSM, and ANGA…VDTL. Ser201 (nucleophile) is an active-site residue. Residue His254 is part of the active site.

Belongs to the peptidase S54 family.

The protein localises to the cell inner membrane. It catalyses the reaction Cleaves type-1 transmembrane domains using a catalytic dyad composed of serine and histidine that are contributed by different transmembrane domains.. Rhomboid-type serine protease that catalyzes intramembrane proteolysis. This is Rhomboid protease GlpG from Salmonella dublin (strain CT_02021853).